Consider the following 602-residue polypeptide: Probable HECT-type ubiquitin ligase-interacting protein creD (602 aa).

Disordered regions lie at residues 375 to 398 (EVDP…GALS) and 457 to 499 (TADY…MATP). Residues 463–475 (PSSGSNSHSPASP) are compositionally biased toward low complexity. Over residues 477–492 (LSRRPSDEGYRDHDHI) the composition is skewed to basic and acidic residues.

This sequence belongs to the arrestin family. In terms of assembly, interacts with hulA.

Its function is as follows. Component of the regulatory network controlling carbon source utilization through ubiquitination and deubiquitination involving creA, creB, creC, creD and acrB. May be involved in signaling by recognizing appropriately phosphorylated substrates via its arrestin domains and then recruit a HECT-type ubiquitin ligase such as hulA, leading to ubiquitination of the substrate, providing a link between ubiquitination and phosphorylation in protein regulation and stability. The protein is Probable HECT-type ubiquitin ligase-interacting protein creD (creD) of Aspergillus clavatus (strain ATCC 1007 / CBS 513.65 / DSM 816 / NCTC 3887 / NRRL 1 / QM 1276 / 107).